The primary structure comprises 629 residues: MLLSELSHPNQLHGLTVSQLEEIACQIRERHLQVVSTSGGHLGPGLGVVELTLALYQTLDLDFDKVVWDVGHQGYPHKLITGRFSQFDSLRQQNGVAGYLKRSESKFDHFGAGHASTSISAALGMAIARDRKGDNYKCVAVIGDGALTGGMALEAINHAGHLPNTPLVVVLNDNDMSISPPVGALSSYLNKVRVSPPLQFLSDSVQESVKNIPLIGKDIPEELKNIKGSVRRLSVPKVGAVFEELGFTYMGPIDGHDIGNLVKTFNAAHKLKRPVLVHVVTTKGKGYPYAEADQVGYHAQSAFDLTTGKSIPSKKPKPVSYSKIFGQTLLKICEQDSKVVGITAAMATGTGLDILQKNIPDQYIDVGIAEQHAVTLAAGMSCDGLKPVVAIYSTFLQRAFDQLIHDVGIQNLPVSFVLDRAGIVGADGPTHQGQYDISYMRSIPNFVLMAPKDESELQRMLITSINHNGPTALRIPRGSGLGVAIMDEGWEPLNIGEAEIIEGGEDILIIAYGSMVASAIETAKILKNMNINACIVNARFVKPLDKNLIMPLASRIQKVVTMEEGTLIGGFGSAIVELFNDNEINIPVYRIGIPDVLVDHASPDQSKEKLGLMPDQMADNIVKKFKLVN.

Thiamine diphosphate contacts are provided by residues His-72 and 113–115; that span reads GHA. Asp-144 lines the Mg(2+) pocket. Residues 145–146, Asn-174, Tyr-287, and Glu-370 contribute to the thiamine diphosphate site; that span reads GA. Asn-174 contacts Mg(2+).

It belongs to the transketolase family. DXPS subfamily. In terms of assembly, homodimer. Mg(2+) is required as a cofactor. Requires thiamine diphosphate as cofactor.

The catalysed reaction is D-glyceraldehyde 3-phosphate + pyruvate + H(+) = 1-deoxy-D-xylulose 5-phosphate + CO2. It functions in the pathway metabolic intermediate biosynthesis; 1-deoxy-D-xylulose 5-phosphate biosynthesis; 1-deoxy-D-xylulose 5-phosphate from D-glyceraldehyde 3-phosphate and pyruvate: step 1/1. Catalyzes the acyloin condensation reaction between C atoms 2 and 3 of pyruvate and glyceraldehyde 3-phosphate to yield 1-deoxy-D-xylulose-5-phosphate (DXP). The polypeptide is 1-deoxy-D-xylulose-5-phosphate synthase (Prochlorococcus marinus (strain MIT 9301)).